The primary structure comprises 149 residues: Cytochrome c-type biogenesis protein CcmE (149 aa).

At 1–7 the chain is on the cytoplasmic side; sequence MKARHKR. The helical; Signal-anchor for type II membrane protein transmembrane segment at 8–28 threads the bilayer; it reads LGLIVAGLAALGLGAALVLSA. At 29–149 the chain is on the periplasmic side; sequence FQKNLVFFFT…GAPALAGALK (121 aa). The heme site is built by His123 and Tyr127.

This sequence belongs to the CcmE/CycJ family.

It is found in the cell inner membrane. In terms of biological role, heme chaperone required for the biogenesis of c-type cytochromes. Transiently binds heme delivered by CcmC and transfers the heme to apo-cytochromes in a process facilitated by CcmF and CcmH. The polypeptide is Cytochrome c-type biogenesis protein CcmE (Polaromonas naphthalenivorans (strain CJ2)).